The chain runs to 493 residues: Leucine-rich repeat-containing protein 14 (493 aa).

One copy of the LRR 1; degenerate repeat lies at 111-146 (KHTLRVLDMTGLLDDGVEQDPGTMSMWDCTAAVART). An LRR 2; degenerate repeat occupies 194–218 (RLCCRDLRAEDLPMRNTVALLQLLD). The LRR 3; degenerate repeat unit spans residues 219-246 (AGCLRRVDLRFNNLGLRGLSVIIPHVAR). The stretch at 247-282 (FQHLASLRLHYVHGDSRQPSVDGEDNFRYFLAQMGR) is one LRR 4; degenerate repeat. LRR repeat units follow at residues 283–307 (FTCL…LSTL), 308–339 (QSPL…VHLK), 340–360 (KLDL…QGLL), 364–391 (AATL…VLTR), and 392–416 (CASL…LLRD).

This sequence belongs to the PRAME family. LRRC14 subfamily. Interacts with IKBKB; disrupts IKBKB-IKBKG interaction preventing I-kappa-B-kinase (IKK) core complex formation and leading to a decrease of IKBKB phosphorylation and NF-kappaB activation. Interacts with CHUK.

It localises to the cytoplasm. Negatively regulates Toll-like receptor-mediated NF-kappa-B signaling by disrupting IKK core complex formation through interaction with IKBKB. The sequence is that of Leucine-rich repeat-containing protein 14 from Bos taurus (Bovine).